Here is a 464-residue protein sequence, read N- to C-terminus: Soluble pyridine nucleotide transhydrogenase (464 aa).

35-44 (DDRPQVGGNC) serves as a coordination point for FAD.

It belongs to the class-I pyridine nucleotide-disulfide oxidoreductase family. FAD serves as cofactor.

Its subcellular location is the cytoplasm. It carries out the reaction NAD(+) + NADPH = NADH + NADP(+). In terms of biological role, conversion of NADPH, generated by peripheral catabolic pathways, to NADH, which can enter the respiratory chain for energy generation. This Azotobacter vinelandii (strain DJ / ATCC BAA-1303) protein is Soluble pyridine nucleotide transhydrogenase.